A 216-amino-acid polypeptide reads, in one-letter code: UPF0134 protein MPN_344 (216 aa).

The segment covering 47–62 (FTIIEDQQDRPDKPEE) has biased composition (basic and acidic residues). Disordered stretches follow at residues 47-104 (FTII…PKPD) and 194-216 (GKMD…LESK). Pro residues predominate over residues 68-78 (IPKPPKPPKGP). Residues 83–93 (EPGQPGGPDDP) show a composition bias toward low complexity.

This sequence belongs to the UPF0134 family.

The chain is UPF0134 protein MPN_344 from Mycoplasma pneumoniae (strain ATCC 29342 / M129 / Subtype 1) (Mycoplasmoides pneumoniae).